We begin with the raw amino-acid sequence, 158 residues long: Transcriptional repressor NrdR (158 aa).

A zinc finger lies at 3 to 34 (CPYCQSEDTQVKDSRPAEDGAVIRRRRVCSVC). Residues 49–139 (LMVVKKSGRR…VYRNFSKAVD (91 aa)) enclose the ATP-cone domain.

The protein belongs to the NrdR family. The cofactor is Zn(2+).

Negatively regulates transcription of bacterial ribonucleotide reductase nrd genes and operons by binding to NrdR-boxes. The protein is Transcriptional repressor NrdR of Brucella abortus (strain S19).